Reading from the N-terminus, the 568-residue chain is Urease subunit alpha (568 aa).

One can recognise a Urease domain in the interval 130–568; that stretch reads GGIDTHIHFI…LPMAQRYFLF (439 aa). Ni(2+) contacts are provided by His-135, His-137, and Lys-218. Lys-218 is subject to N6-carboxylysine. Residue His-220 participates in substrate binding. The Ni(2+) site is built by His-247 and His-273. His-321 (proton donor) is an active-site residue. Asp-361 serves as a coordination point for Ni(2+).

This sequence belongs to the metallo-dependent hydrolases superfamily. Urease alpha subunit family. As to quaternary structure, heterotrimer of UreA (gamma), UreB (beta) and UreC (alpha) subunits. Three heterotrimers associate to form the active enzyme. The cofactor is Ni cation. In terms of processing, carboxylation allows a single lysine to coordinate two nickel ions.

Its subcellular location is the cytoplasm. It catalyses the reaction urea + 2 H2O + H(+) = hydrogencarbonate + 2 NH4(+). The protein operates within nitrogen metabolism; urea degradation; CO(2) and NH(3) from urea (urease route): step 1/1. The polypeptide is Urease subunit alpha (Burkholderia pseudomallei (strain 668)).